The following is a 157-amino-acid chain: Ribosomal RNA large subunit methyltransferase H (157 aa).

S-adenosyl-L-methionine is bound by residues Leu-73, Gly-105, and 124–129; that span reads LSRMTF.

Belongs to the RNA methyltransferase RlmH family. Homodimer.

Its subcellular location is the cytoplasm. The catalysed reaction is pseudouridine(1915) in 23S rRNA + S-adenosyl-L-methionine = N(3)-methylpseudouridine(1915) in 23S rRNA + S-adenosyl-L-homocysteine + H(+). In terms of biological role, specifically methylates the pseudouridine at position 1915 (m3Psi1915) in 23S rRNA. The chain is Ribosomal RNA large subunit methyltransferase H from Porphyromonas gingivalis (strain ATCC 33277 / DSM 20709 / CIP 103683 / JCM 12257 / NCTC 11834 / 2561).